The chain runs to 401 residues: Chalcone synthase 3 (401 aa).

C168 is a catalytic residue.

Belongs to the thiolase-like superfamily. Chalcone/stilbene synthases family.

The catalysed reaction is (E)-4-coumaroyl-CoA + 3 malonyl-CoA + 3 H(+) = 2',4,4',6'-tetrahydroxychalcone + 3 CO2 + 4 CoA. The protein operates within secondary metabolite biosynthesis; flavonoid biosynthesis. In terms of biological role, the primary product of this enzyme is 4,2',4',6'-tetrahydroxychalcone (also termed naringenin-chalcone or chalcone) which can under specific conditions spontaneously isomerize into naringenin. In Sorghum bicolor (Sorghum), this protein is Chalcone synthase 3 (CHS3).